Consider the following 259-residue polypeptide: PF03932 family protein CutC (259 aa).

It belongs to the CutC family. In terms of assembly, homodimer.

It localises to the cytoplasm. In Salmonella typhi, this protein is PF03932 family protein CutC.